Consider the following 1537-residue polypeptide: DNA-directed RNA polymerase subunit beta' (1537 aa).

Residues cysteine 57, cysteine 59, cysteine 72, and cysteine 75 each coordinate Zn(2+). Positions 746, 748, and 750 each coordinate Mg(2+). Residues cysteine 1120, cysteine 1201, cysteine 1208, and cysteine 1211 each contribute to the Zn(2+) site. Positions 1502–1537 (LEKYGQTSVSTDAVTGSQRYDDTRPSSTSINPSYGD) are disordered. Polar residues-rich tracts occupy residues 1506 to 1519 (GQTSVSTDAVTGSQ) and 1526 to 1537 (PSSTSINPSYGD).

This sequence belongs to the RNA polymerase beta' chain family. As to quaternary structure, the RNAP catalytic core consists of 2 alpha, 1 beta, 1 beta' and 1 omega subunit. When a sigma factor is associated with the core the holoenzyme is formed, which can initiate transcription. Mg(2+) serves as cofactor. The cofactor is Zn(2+).

It catalyses the reaction RNA(n) + a ribonucleoside 5'-triphosphate = RNA(n+1) + diphosphate. In terms of biological role, DNA-dependent RNA polymerase catalyzes the transcription of DNA into RNA using the four ribonucleoside triphosphates as substrates. The sequence is that of DNA-directed RNA polymerase subunit beta' from Deinococcus geothermalis (strain DSM 11300 / CIP 105573 / AG-3a).